The chain runs to 801 residues: uncharacterized protein (801 aa).

The 93-residue stretch at 1–93 folds into the PE domain; it reads MSWVMVSPEL…GGAYAAAEAA (93 aa).

This sequence belongs to the mycobacterial PE family. PGRS subfamily.

This is an uncharacterized protein from Mycobacterium tuberculosis (strain ATCC 25618 / H37Rv).